Here is a 793-residue protein sequence, read N- to C-terminus: Probable serine/threonine-protein kinase fnkA (793 aa).

Residues 11–358 (WEILSQLGTG…IINLISHNFI (348 aa)) form the Protein kinase domain. ATP is bound by residues 17 to 25 (LGTGAFGRV) and K46. The active-site Proton acceptor is the D138. FNIP repeat units follow at residues 403–444 (FNQT…FGAR), 470–514 (YNQP…ILGD), 515–557 (YDQK…LGYR), 558–601 (FNKA…LGYC), and 691–733 (FIRP…LGSR).

The protein belongs to the protein kinase superfamily. STE Ser/Thr protein kinase family. Mg(2+) is required as a cofactor.

The catalysed reaction is L-seryl-[protein] + ATP = O-phospho-L-seryl-[protein] + ADP + H(+). It catalyses the reaction L-threonyl-[protein] + ATP = O-phospho-L-threonyl-[protein] + ADP + H(+). This is Probable serine/threonine-protein kinase fnkA from Dictyostelium discoideum (Social amoeba).